We begin with the raw amino-acid sequence, 333 residues long: Ornithine carbamoyltransferase (333 aa).

Carbamoyl phosphate contacts are provided by residues 56-59, glutamine 83, arginine 107, and 134-137; these read STRT and HPTQ. Residues asparagine 167, aspartate 231, and 235 to 236 each bind L-ornithine; that span reads SM. Residues 273–274 and arginine 318 each bind carbamoyl phosphate; that span reads CL.

It belongs to the aspartate/ornithine carbamoyltransferase superfamily. OTCase family.

It localises to the cytoplasm. The catalysed reaction is carbamoyl phosphate + L-ornithine = L-citrulline + phosphate + H(+). Its pathway is amino-acid biosynthesis; L-arginine biosynthesis; L-arginine from L-ornithine and carbamoyl phosphate: step 1/3. Its function is as follows. Reversibly catalyzes the transfer of the carbamoyl group from carbamoyl phosphate (CP) to the N(epsilon) atom of ornithine (ORN) to produce L-citrulline. The polypeptide is Ornithine carbamoyltransferase (argF) (Staphylococcus aureus (strain COL)).